Consider the following 219-residue polypeptide: Uracil-DNA glycosylase (219 aa).

Catalysis depends on Asp61, which acts as the Proton acceptor.

Belongs to the uracil-DNA glycosylase (UDG) superfamily. UNG family.

It is found in the cytoplasm. It carries out the reaction Hydrolyzes single-stranded DNA or mismatched double-stranded DNA and polynucleotides, releasing free uracil.. Its function is as follows. Excises uracil residues from the DNA which can arise as a result of misincorporation of dUMP residues by DNA polymerase or due to deamination of cytosine. In Neisseria meningitidis serogroup C (strain 053442), this protein is Uracil-DNA glycosylase.